The chain runs to 591 residues: L-fucose isomerase (591 aa).

Residues E337 and D361 each act as proton acceptor in the active site. Mn(2+) contacts are provided by E337, D361, and H528.

The protein belongs to the L-fucose isomerase family. As to quaternary structure, homohexamer. Mn(2+) serves as cofactor.

It is found in the cytoplasm. The enzyme catalyses L-fucose = L-fuculose. It participates in carbohydrate degradation; L-fucose degradation; L-lactaldehyde and glycerone phosphate from L-fucose: step 1/3. Its function is as follows. Converts the aldose L-fucose into the corresponding ketose L-fuculose. This Escherichia coli O139:H28 (strain E24377A / ETEC) protein is L-fucose isomerase.